The sequence spans 185 residues: Ribosome-recycling factor (185 aa).

Belongs to the RRF family.

The protein localises to the cytoplasm. Functionally, responsible for the release of ribosomes from messenger RNA at the termination of protein biosynthesis. May increase the efficiency of translation by recycling ribosomes from one round of translation to another. The polypeptide is Ribosome-recycling factor (Aliivibrio fischeri (strain MJ11) (Vibrio fischeri)).